Consider the following 87-residue polypeptide: Cell division topological specificity factor (87 aa).

Belongs to the MinE family.

In terms of biological role, prevents the cell division inhibition by proteins MinC and MinD at internal division sites while permitting inhibition at polar sites. This ensures cell division at the proper site by restricting the formation of a division septum at the midpoint of the long axis of the cell. This chain is Cell division topological specificity factor, found in Herpetosiphon aurantiacus (strain ATCC 23779 / DSM 785 / 114-95).